The following is a 180-amino-acid chain: Probable chorismate pyruvate-lyase (180 aa).

Residues R82, L120, and E165 each coordinate substrate.

The protein belongs to the UbiC family.

It is found in the cytoplasm. It catalyses the reaction chorismate = 4-hydroxybenzoate + pyruvate. It participates in cofactor biosynthesis; ubiquinone biosynthesis. Removes the pyruvyl group from chorismate, with concomitant aromatization of the ring, to provide 4-hydroxybenzoate (4HB) for the ubiquinone pathway. The chain is Probable chorismate pyruvate-lyase from Aliivibrio fischeri (strain ATCC 700601 / ES114) (Vibrio fischeri).